The chain runs to 586 residues: Pyruvate kinase (586 aa).

Arginine 32 contributes to the substrate binding site. K(+)-binding residues include asparagine 34, serine 36, aspartate 66, and threonine 67. 34–37 (NFSH) is an ATP binding site. Residues arginine 73 and lysine 156 each contribute to the ATP site. Residue glutamate 222 participates in Mg(2+) binding. Residues glycine 245, aspartate 246, and threonine 278 each coordinate substrate. Aspartate 246 lines the Mg(2+) pocket.

This sequence belongs to the pyruvate kinase family. In the C-terminal section; belongs to the PEP-utilizing enzyme family. Mg(2+) is required as a cofactor. The cofactor is K(+).

It catalyses the reaction pyruvate + ATP = phosphoenolpyruvate + ADP + H(+). It participates in carbohydrate degradation; glycolysis; pyruvate from D-glyceraldehyde 3-phosphate: step 5/5. The chain is Pyruvate kinase (pyk) from Staphylococcus saprophyticus subsp. saprophyticus (strain ATCC 15305 / DSM 20229 / NCIMB 8711 / NCTC 7292 / S-41).